We begin with the raw amino-acid sequence, 258 residues long: UBX domain-containing protein 2A (258 aa).

Residues 1–152 (MKEVDNLDSI…SATPRIVSKA (152 aa)) are required for interaction with CHRNA3. The segment at 1-165 (MKEVDNLDSI…EVDNKSTLSA (165 aa)) is required for inhibition of CHRNA3 ubiquitination and translocation of CHRNA3 to the plasma membrane resulting in an increase in acetylcholine-gated nicotinic acetylcholine receptor currents. Residues 61 to 125 (QVDVNIKLWK…VEDKKNEVCM (65 aa)) form the SEP domain. Residues 168–258 (LNNLEPITRI…QKTAEPFRKL (91 aa)) are required for interaction with VCP. The 78-residue stretch at 170–247 (NLEPITRIQI…DLQNAVIIQR (78 aa)) folds into the UBX domain.

In terms of assembly, part of a complex composed of STUB1/CHIP, VCP/p97, CHRNA3, and UBXN2A that modulates the ubiquitination and endoplasmic reticulum-associated degradation (ERAD) of CHRNA3. Within the complex UBXN2A acts as a scaffold protein required for the interaction of CHRNA3 with VCP/p97, this interaction also inhibits CHRNA3 ubiquitination by STUB1/CHIP and subsequently ERAD. Interacts (via SEP domain) with CHRNA3 and interacts (via UBX domain) with VCP/P97; these interactions are required for the interaction of CHRNA3 with the STUB1-VCP-UBXN2A complex. Interacts with HSPA9/MOT-2 (via SBD domain); the interaction inhibits HSPA9/MOT-2 interaction with and degradation of p53, thereby promotes p53 translocation to the nucleus. Interacts with RICTOR. In terms of processing, ubiquitinated.

The protein resides in the golgi apparatus. It localises to the endoplasmic reticulum. The protein localises to the perikaryon. It is found in the cell projection. Its subcellular location is the dendrite. The protein resides in the nucleus. It localises to the cytoplasm. Functionally, acts to repress the ubiquitination and subsequent endoplasmic reticulum-associated degradation of CHRNA3 by the STUB1-VCP-UBXN2A complex in cortical neurons. Also acts to promote the translocation of CHRNA3 to the plasma membrane and subsequently increases plasma membrane acetylcholine-gated ion-channel activation. Plays a role in the inhibition of STUB1-mediated TP53 degradation, via its interaction with HSPA9 which acts to inhibit TP53 binding to HSPA9. Positively mediates the ubiquitination and proteosomal degradation of RICTOR, may thereby act as a negative regulator of the mTORC2 pathway. The chain is UBX domain-containing protein 2A from Rattus norvegicus (Rat).